Reading from the N-terminus, the 414-residue chain is Imidazolonepropionase (414 aa).

Residues histidine 95 and histidine 97 each contribute to the Fe(3+) site. The Zn(2+) site is built by histidine 95 and histidine 97. Residues arginine 104, tyrosine 162, and histidine 189 each contribute to the 4-imidazolone-5-propanoate site. An N-formimidoyl-L-glutamate-binding site is contributed by tyrosine 162. Histidine 252 lines the Fe(3+) pocket. Histidine 252 is a binding site for Zn(2+). A 4-imidazolone-5-propanoate-binding site is contributed by glutamine 255. Aspartate 326 contributes to the Fe(3+) binding site. Residue aspartate 326 coordinates Zn(2+). Residues asparagine 328 and glycine 330 each coordinate N-formimidoyl-L-glutamate. Serine 331 is a 4-imidazolone-5-propanoate binding site.

It belongs to the metallo-dependent hydrolases superfamily. HutI family. Zn(2+) is required as a cofactor. The cofactor is Fe(3+).

The protein localises to the cytoplasm. It catalyses the reaction 4-imidazolone-5-propanoate + H2O = N-formimidoyl-L-glutamate. It participates in amino-acid degradation; L-histidine degradation into L-glutamate; N-formimidoyl-L-glutamate from L-histidine: step 3/3. Functionally, catalyzes the hydrolytic cleavage of the carbon-nitrogen bond in imidazolone-5-propanoate to yield N-formimidoyl-L-glutamate. It is the third step in the universal histidine degradation pathway. This Streptomyces avermitilis (strain ATCC 31267 / DSM 46492 / JCM 5070 / NBRC 14893 / NCIMB 12804 / NRRL 8165 / MA-4680) protein is Imidazolonepropionase.